A 784-amino-acid polypeptide reads, in one-letter code: Toll-like receptor 2 (784 aa).

The first 20 residues, 1-20 (MPHTLWMVWVLGVIISLSKE), serve as a signal peptide directing secretion. Topologically, residues 21-588 (ESSNQASLSC…RLSVSECHRT (568 aa)) are extracellular. Cys30 and Cys36 are joined by a disulfide. LRR repeat units lie at residues 54-77 (VKSL…RCVN), 78-101 (LQAL…SLGS), 102-125 (LEHL…PLSS), 126-150 (LTFL…HLTK), 151-175 (LQIL…GLTF), 176-199 (LEEL…SIQN), 200-223 (VSHL…VTSS), 224-250 (VECL…TNSL), 251-278 (IKKF…QISG), 279-308 (LLEL…DPGK), 309-337 (VETL…LTER), 338-361 (VKRI…HLKS), 362-388 (LEYL…AWPS), 389-414 (LQTL…TLKN), 415-437 (LTNI…WPEK), 438-457 (MKYL…CIPK), 458-478 (TLEI…NLPQ), 479-500 (LKEL…LLPM), and 501-524 (LLVL…SFHT). An N-linked (GlcNAc...) asparagine glycan is attached at Asn114. Asn199 is a glycosylation site (N-linked (GlcNAc...) asparagine). Cys353 and Cys382 are joined by a disulfide. The N-linked (GlcNAc...) asparagine glycan is linked to Asn414. A disulfide bridge links Cys432 with Cys454. Asn442 carries an N-linked (GlcNAc...) asparagine glycan. Residues 525 to 579 (LKTLEAGGNNFICSCEFLSFTQEQQALAKVLIDWPANYLCDSPSHVRGQQVQDVR) form the LRRCT domain. A helical transmembrane segment spans residues 589–609 (ALVSGMCCALFLLILLTGVLC). Residues 610–784 (HRFHGLWYMK…WVNLRAAIKS (175 aa)) lie on the Cytoplasmic side of the membrane. The 144-residue stretch at 639-782 (ICYDAFVSYS…GFWVNLRAAI (144 aa)) folds into the TIR domain. Lys754 is covalently cross-linked (Glycyl lysine isopeptide (Lys-Gly) (interchain with G-Cter in ubiquitin)). The short motif at 761 to 778 (YLEWPMDEAQREGFWVNL) is the ATG16L1-binding motif element.

It belongs to the Toll-like receptor family. In terms of assembly, interacts with LY96, TLR1 and TLR6 (via extracellular domain). TLR2 seems to exist in heterodimers with either TLR1 or TLR6 before stimulation by the ligand. The heterodimers form bigger oligomers in response to their corresponding ligands as well as further heterotypic associations with other receptors such as CD14 and/or CD36. Binds MYD88 (via TIR domain). Interacts with TICAM1. Interacts with CNPY3. Interacts with ATG16L1. Interacts with PPP1R11. Interacts with TICAM2. Interacts with TIRAP. As to quaternary structure, (Microbial infection) Interacts with M.tuberculosis EsxA. (Microbial infection) Interacts with M.bovis MPB83. In terms of assembly, (Microbial infection) Interacts with Staphylococcus aureus protein SSL5. In terms of processing, glycosylation of Asn-442 is critical for secretion of the N-terminal ectodomain of TLR2. Ubiquitinated at Lys-754 by PPP1R11, leading to its degradation. Deubiquitinated by USP2. As to expression, highly expressed in peripheral blood leukocytes, in particular in monocytes, in bone marrow, lymph node and in spleen. Also detected in lung and in fetal liver. Levels are low in other tissues.

Its subcellular location is the membrane. It localises to the cytoplasmic vesicle. The protein localises to the phagosome membrane. The protein resides in the membrane raft. Cooperates with LY96 to mediate the innate immune response to bacterial lipoproteins and other microbial cell wall components. Cooperates with TLR1 or TLR6 to mediate the innate immune response to bacterial lipoproteins or lipopeptides. Acts via MYD88 and TRAF6, leading to NF-kappa-B activation, cytokine secretion and the inflammatory response. May also activate immune cells and promote apoptosis in response to the lipid moiety of lipoproteins. Recognizes mycoplasmal macrophage-activating lipopeptide-2kD (MALP-2), soluble tuberculosis factor (STF), phenol-soluble modulin (PSM) and B.burgdorferi outer surface protein A lipoprotein (OspA-L) cooperatively with TLR6. Stimulation of monocytes in vitro with M.tuberculosis PstS1 induces p38 MAPK and ERK1/2 activation primarily via this receptor, but also partially via TLR4. MAPK activation in response to bacterial peptidoglycan also occurs via this receptor. Acts as a receptor for M.tuberculosis lipoproteins LprA, LprG, LpqH and PstS1, some lipoproteins are dependent on other coreceptors (TLR1, CD14 and/or CD36); the lipoproteins act as agonists to modulate antigen presenting cell functions in response to the pathogen. M.tuberculosis HSP70 (dnaK) but not HSP65 (groEL-2) acts via this protein to stimulate NF-kappa-B expression. Recognizes M.tuberculosis major T-antigen EsxA (ESAT-6) which inhibits downstream MYD88-dependent signaling (shown in mouse). Forms activation clusters composed of several receptors depending on the ligand, these clusters trigger signaling from the cell surface and subsequently are targeted to the Golgi in a lipid-raft dependent pathway. Forms the cluster TLR2:TLR6:CD14:CD36 in response to diacylated lipopeptides and TLR2:TLR1:CD14 in response to triacylated lipopeptides. Required for normal uptake of M.tuberculosis, a process that is inhibited by M.tuberculosis LppM. This is Toll-like receptor 2 from Homo sapiens (Human).